Here is a 262-residue protein sequence, read N- to C-terminus: Type III pantothenate kinase (262 aa).

Aspartate 9–lysine 16 is an ATP binding site. Substrate contacts are provided by residues tyrosine 103 and glycine 110–arginine 113. The Proton acceptor role is filled by aspartate 112. K(+) is bound at residue aspartate 134. Threonine 137 serves as a coordination point for ATP. A substrate-binding site is contributed by threonine 190.

This sequence belongs to the type III pantothenate kinase family. As to quaternary structure, homodimer. It depends on NH4(+) as a cofactor. K(+) serves as cofactor.

It localises to the cytoplasm. The enzyme catalyses (R)-pantothenate + ATP = (R)-4'-phosphopantothenate + ADP + H(+). Its pathway is cofactor biosynthesis; coenzyme A biosynthesis; CoA from (R)-pantothenate: step 1/5. Its function is as follows. Catalyzes the phosphorylation of pantothenate (Pan), the first step in CoA biosynthesis. The sequence is that of Type III pantothenate kinase from Nitratidesulfovibrio vulgaris (strain DSM 19637 / Miyazaki F) (Desulfovibrio vulgaris).